A 445-amino-acid chain; its full sequence is Exodeoxyribonuclease 7 large subunit (445 aa).

It belongs to the XseA family. Heterooligomer composed of large and small subunits.

It is found in the cytoplasm. The enzyme catalyses Exonucleolytic cleavage in either 5'- to 3'- or 3'- to 5'-direction to yield nucleoside 5'-phosphates.. In terms of biological role, bidirectionally degrades single-stranded DNA into large acid-insoluble oligonucleotides, which are then degraded further into small acid-soluble oligonucleotides. This is Exodeoxyribonuclease 7 large subunit from Shewanella pealeana (strain ATCC 700345 / ANG-SQ1).